Consider the following 420-residue polypeptide: Protein translocase subunit SecF (420 aa).

The next 6 helical transmembrane spans lie at 7–27 (FSLL…AGVL), 250–270 (LLVR…FLYV), 276–296 (WFFA…MVSF), 309–327 (IAAI…VVVF), 358–378 (VVTT…TEGG), and 388–408 (VGMV…IALI).

The protein belongs to the SecD/SecF family. SecF subfamily. Forms a complex with SecD. Part of the essential Sec protein translocation apparatus which comprises SecA, SecYEG and auxiliary proteins SecDF. Other proteins may also be involved.

It localises to the cell inner membrane. In terms of biological role, part of the Sec protein translocase complex. Interacts with the SecYEG preprotein conducting channel. SecDF uses the proton motive force (PMF) to complete protein translocation after the ATP-dependent function of SecA. This Treponema pallidum (strain Nichols) protein is Protein translocase subunit SecF.